The chain runs to 204 residues: MDVAFESPYWKKFQYICGVDEVGRGPLAGPVVAAAVIFDRYFEPSGILEQIDDSKALRHETRVLLSSEIKKQALSFSIAEISPEVIDEVNILQATFLAMNQAIEQLSPIPEFLLIDGNRFKTTLPIPFETVVKGDSKVFSIAAASIIAKVHRDNFMINLAERYPEYGFAQHFGYPTKAHIEAIKMFGRSKVHRKSFKLSCLGEK.

In terms of domain architecture, RNase H type-2 spans 14 to 204 (QYICGVDEVG…SFKLSCLGEK (191 aa)). D20, E21, and D116 together coordinate a divalent metal cation.

The protein belongs to the RNase HII family. Mn(2+) is required as a cofactor. The cofactor is Mg(2+).

Its subcellular location is the cytoplasm. The catalysed reaction is Endonucleolytic cleavage to 5'-phosphomonoester.. In terms of biological role, endonuclease that specifically degrades the RNA of RNA-DNA hybrids. The sequence is that of Ribonuclease HII from Chloroherpeton thalassium (strain ATCC 35110 / GB-78).